Reading from the N-terminus, the 444-residue chain is Protein cereblon (444 aa).

The disordered stretch occupies residues 1 to 52; the sequence is MAGEGDPEDAAHNMGNHLPLLPAEEEEEDEIEMEVEDQDNKEPKKPNIINFD. The segment covering 23 to 37 has biased composition (acidic residues); the sequence is AEEEEEDEIEMEVED. In terms of domain architecture, Lon N-terminal spans 80-321; that stretch reads CPVIPVLPQV…CELDIMNKCT (242 aa). Positions 320-428 constitute a CULT domain; it reads CTSLCCKQCQ…LTRSALLPTI (109 aa). Zn(2+)-binding residues include C325 and C328. Positions 380, 382, and 388 each coordinate (S)-thalidomide. The Zn(2+) site is built by C393 and C396.

It belongs to the CRBN family. As to quaternary structure, component of a DCX (DDB1-CUL4-X-box) protein ligase complex, at least composed of CRBN, CUL4A, DDB1 and RBX1. Interacts directly with DDB1. Interacts with KCNT1. Interacts with ILF2. Interacts with TRAF6 and ECSIT. In terms of processing, ubiquitinated, ubiquitination is mediated by its own DCX protein ligase complex.

It is found in the cytoplasm. It localises to the nucleus. Its subcellular location is the membrane. Its pathway is protein modification; protein ubiquitination. Its function is as follows. Substrate recognition component of a DCX (DDB1-CUL4-X-box) E3 protein ligase complex that mediates the ubiquitination and subsequent proteasomal degradation of target proteins, such as MEIS2, ILF2 or GLUL. Normal degradation of key regulatory proteins is required for normal limb outgrowth and expression of the fibroblast growth factor FGF8. Maintains presynaptic glutamate release and consequently cognitive functions, such as memory and learning, by negatively regulating large-conductance calcium-activated potassium (BK) channels in excitatory neurons. Likely to function by regulating the assembly and neuronal surface expression of BK channels via its interaction with KCNT1. May also be involved in regulating anxiety-like behaviors via a BK channel-independent mechanism. Plays a negative role in TLR4 signaling by interacting with TRAF6 and ECSIT, leading to inhibition of ECSIT ubiquitination, an important step of the signaling. The chain is Protein cereblon (CRBN) from Bos taurus (Bovine).